The primary structure comprises 263 residues: Large ribosomal subunit protein uL29m (263 aa).

Disordered stretches follow at residues Ala-51–Pro-92 and Pro-208–Val-263. Residues Val-53–Leu-66 show a composition bias toward basic and acidic residues. Residues Asn-214 to Thr-223 show a composition bias toward polar residues. Over residues Gly-233–Glu-245 the composition is skewed to low complexity. A compositionally biased stretch (polar residues) spans Ile-246 to Gln-257.

This sequence belongs to the universal ribosomal protein uL29 family. Component of the mitochondrial large ribosomal subunit (mt-LSU). Mature N.crassa 74S mitochondrial ribosomes consist of a small (37S) and a large (54S) subunit. The 37S small subunit contains a 16S ribosomal RNA (16S mt-rRNA) and 32 different proteins. The 54S large subunit contains a 23S rRNA (23S mt-rRNA) and 42 different proteins.

It is found in the mitochondrion. Its function is as follows. Component of the mitochondrial ribosome (mitoribosome), a dedicated translation machinery responsible for the synthesis of mitochondrial genome-encoded proteins, including at least some of the essential transmembrane subunits of the mitochondrial respiratory chain. The mitoribosomes are attached to the mitochondrial inner membrane and translation products are cotranslationally integrated into the membrane. In Neurospora crassa (strain ATCC 24698 / 74-OR23-1A / CBS 708.71 / DSM 1257 / FGSC 987), this protein is Large ribosomal subunit protein uL29m (mrpl4).